Here is a 940-residue protein sequence, read N- to C-terminus: MDKIEVRGARTHNLKDINLTIPRDKLTVITGLSGSGKSSLAFDTLYAEGQRRYVESLSAYARQFLSLMEKPDVDHIEGLSPAISIEQKSTSHNPRSTVGTITEVYDYLRLLYARVGEPRCPTHHAPLAAQTVSQMVDKVLELPEGSKMMLLAPIVKERKGEHVKTLENLAAQGFIRARIDGETCDLSDPPTLELHKKHTIEVVVDRFKVRPDLQQRLAESFETTLELSGGIAVVAPMDGDGEEIIFSANFACPQCGYSMQELEPRLFSFNNPAGACGTCDGLGVQQYFDPSRVIQDDSLSLAQGAIRGWDQKNYYYFQMLTSLADHYGFDLHAPFNSLPKKTQDVILKGSGRTEIEFKYINDRGDIRVKRHPFEGILNTLERRYRDTESNSVREELAKYISTKSCSSCGGTRLRLEARNVFIADTTLPEIVELSIADALTFFQTLKLEGQRAQIAEKVMKEINDRLQFLVNVGLNYLNLSRSAETLSGGEAQRIRLASQIGAGLVGVMYVLDEPSIGLHQRDNERLLKTLTHLRDLGNTVLVVEHDEDAIRCADHVIDIGPGAGVHGGNVVAEGTMDEIIANPNSLTGQYLSGAKEIAVPKERTPRDPKKTVELLGATGNNLKNVDLSIPVGLFSCITGVSGSGKSTLINDTFFKIAHTQLNGATTAHPSPYKSIKGLEHFDKVIDIDQSPIGRTPRSNPATYTGIFTPIRELFAGTQESRSRGYKPGRFSFNVRGGRCEACQGDGVIKVEMHFLPDVYVPCDVCKGKRYNRETLEVRYKGKTIDEVLEMTVEDARTFFDPVPAIARKLQTLMDVGLSYIRLGQAATTLSGGEAQRVKLARELSKRDTGKTLYILDEPTTGLHFHDIQQLLTVLHRLRDHGNTVVVIEHNLDVIKTADWIIDLGPEGGQGGGEIIAQGTPEDVSQIEGSHTARFLKPMLK.

Residue 31–38 (GLSGSGKS) coordinates ATP. The C4-type zinc finger occupies 252–279 (CPQCGYSMQELEPRLFSFNNPAGACGTC). ABC transporter domains lie at 309–586 (WDQK…PNSL) and 606–936 (RDPK…RFLK). 639–646 (GVSGSGKS) provides a ligand contact to ATP. Residues 739–765 (CEACQGDGVIKVEMHFLPDVYVPCDVC) form a C4-type zinc finger.

This sequence belongs to the ABC transporter superfamily. UvrA family. As to quaternary structure, forms a heterotetramer with UvrB during the search for lesions.

The protein localises to the cytoplasm. In terms of biological role, the UvrABC repair system catalyzes the recognition and processing of DNA lesions. UvrA is an ATPase and a DNA-binding protein. A damage recognition complex composed of 2 UvrA and 2 UvrB subunits scans DNA for abnormalities. When the presence of a lesion has been verified by UvrB, the UvrA molecules dissociate. This chain is UvrABC system protein A, found in Vibrio parahaemolyticus serotype O3:K6 (strain RIMD 2210633).